A 515-amino-acid chain; its full sequence is MDEFHRCGKEDSFWQQCFLYPLFFQEDLYAISHDHYLDVSSSSRPMEHLSSNDQLSFLTVKRLIGQIRQQNHSIVLFVNCDPNPLADRKKSFYSESVLEALTLVLEVPFSIWSKSSVEGMNECKSFRSIHSIFPFLEDKFPHSNSILDARIPYSIHPEILVRTFRRWIRDAPSLHPLRSVLYDYRNSPENLQRSIIVVPRVNTRFFLFLLNYYVCECESILFSRLKRSSHSRSLDHGSFPQRTHFHRKIKHIIIFSRRNSLKSIWSLKDPKIHYVRYGERPIIAIKGADLLVKKCRYYLLIFRQFYFHLWSEPYRVCSHQLSKNCSSSPGYFLRVRMNPLLVRTKTLDELFIPVLITNEMDPIVPIVPIIGLLATEKFCDISGRPISKLSWTSLTDDDILDRFDQIWRNLFHYYSGSFDRDGLYRIKYILLLSCAKTLACKHKSTIRVVRKELGPELFKKSFSKEREFDSLPFSSKAAARSQRERIWHSDIPQINPLANSWQKIQDLKIENLFDQ.

This sequence belongs to the intron maturase 2 family. MatK subfamily.

It localises to the plastid. Its subcellular location is the chloroplast. Usually encoded in the trnK tRNA gene intron. Probably assists in splicing its own and other chloroplast group II introns. This chain is Maturase K, found in Pinus densiflora (Japanese red pine).